A 729-amino-acid chain; its full sequence is Monosaccharide-sensing protein 3 (729 aa).

The next 6 membrane-spanning stretches (helical) occupy residues 5 to 25 (VLVA…NATI), 46 to 66 (GLIV…SGPV), 81 to 101 (VLYF…VLLF), 104 to 124 (LLDG…ISET), 135 to 155 (TFPQ…VFGM), and 165 to 185 (LMLG…AFFL). Residues 337–372 (QESQWDPERNNEDSSDQDENLNSPLLSPQTTEPDDY) form a disordered region. Positions 356-367 (NLNSPLLSPQTT) are enriched in polar residues. Position 446 is a phosphoserine (serine 446). Transmembrane regions (helical) follow at residues 511 to 531 (ALMV…NGVM), 557 to 577 (ASLL…LVSM), 581 to 601 (MLST…GSLV), 610 to 630 (LIST…FGAI), 650 to 670 (ICAL…PVML), and 673 to 693 (IGIA…WVFV).

This sequence belongs to the major facilitator superfamily. Sugar transporter (TC 2.A.1.1) family. As to expression, weakly expressed.

It is found in the vacuole membrane. The enzyme catalyses D-glucose(out) + H(+)(in) = D-glucose(in) + H(+)(out). The catalysed reaction is sucrose(out) + H(+)(in) = sucrose(in) + H(+)(out). In terms of biological role, sugar proton-coupled antiporter which contributes to vacuolar sugar import (e.g. monosaccharides including glucose,sucrose and fructose), particularly during stress responses (e.g. in response to cold). The sequence is that of Monosaccharide-sensing protein 3 from Arabidopsis thaliana (Mouse-ear cress).